Reading from the N-terminus, the 166-residue chain is Prorelaxin H1 (166 aa).

Residues 1–5 form the signal peptide; sequence SRAVA. Cystine bridges form between cysteine 16/cysteine 153, cysteine 28/cysteine 166, and cysteine 152/cysteine 157. Residues 37–139 constitute a propeptide, connecting peptide; it reads SLSQEDAPQT…KYLGLDTHSQ (103 aa).

Belongs to the insulin family. In terms of assembly, heterodimer of a B chain and an A chain linked by two disulfide bonds. Expressed in the corpus luteum of pregnancy but not in the placenta.

Its subcellular location is the secreted. Functionally, relaxin is an ovarian hormone that acts with estrogen to produce dilatation of the birth canal in many mammals. May be involved in remodeling of connective tissues during pregnancy, promoting growth of pubic ligaments and ripening of the cervix. The sequence is that of Prorelaxin H1 (RNL1) from Pan troglodytes (Chimpanzee).